Here is an 88-residue protein sequence, read N- to C-terminus: MLDTKFDELMEFPSSFPFKIVGDASDTLADRVVAVAQSLAPDDYTPITKVSSKGTYNSVTIRITVTSKEQIEQLYTQLAAIEGVKRVL.

Belongs to the UPF0250 family.

In Shewanella halifaxensis (strain HAW-EB4), this protein is UPF0250 protein Shal_3239.